Here is a 371-residue protein sequence, read N- to C-terminus: Queuine tRNA-ribosyltransferase (371 aa).

Catalysis depends on Asp90, which acts as the Proton acceptor. Substrate is bound by residues 90-94 (DSGGF), Asp144, Gln189, and Gly215. The segment at 246-252 (GVGTPEN) is RNA binding. Catalysis depends on Asp265, which acts as the Nucleophile. The segment at 270–274 (TRNAR) is RNA binding; important for wobble base 34 recognition. Zn(2+) is bound by residues Cys303, Cys305, Cys308, and His334.

Belongs to the queuine tRNA-ribosyltransferase family. In terms of assembly, homodimer. Within each dimer, one monomer is responsible for RNA recognition and catalysis, while the other monomer binds to the replacement base PreQ1. Zn(2+) serves as cofactor.

The enzyme catalyses 7-aminomethyl-7-carbaguanine + guanosine(34) in tRNA = 7-aminomethyl-7-carbaguanosine(34) in tRNA + guanine. The protein operates within tRNA modification; tRNA-queuosine biosynthesis. Its function is as follows. Catalyzes the base-exchange of a guanine (G) residue with the queuine precursor 7-aminomethyl-7-deazaguanine (PreQ1) at position 34 (anticodon wobble position) in tRNAs with GU(N) anticodons (tRNA-Asp, -Asn, -His and -Tyr). Catalysis occurs through a double-displacement mechanism. The nucleophile active site attacks the C1' of nucleotide 34 to detach the guanine base from the RNA, forming a covalent enzyme-RNA intermediate. The proton acceptor active site deprotonates the incoming PreQ1, allowing a nucleophilic attack on the C1' of the ribose to form the product. After dissociation, two additional enzymatic reactions on the tRNA convert PreQ1 to queuine (Q), resulting in the hypermodified nucleoside queuosine (7-(((4,5-cis-dihydroxy-2-cyclopenten-1-yl)amino)methyl)-7-deazaguanosine). In Helicobacter pylori (strain Shi470), this protein is Queuine tRNA-ribosyltransferase.